The following is a 1277-amino-acid chain: Protein FAM83H (1277 aa).

Residues 1–12 (MARRSQSSSQGE) show a composition bias toward polar residues. 8 disordered regions span residues 1 to 20 (MARR…PNYL), 67 to 98 (SLQR…SGTY), 717 to 756 (FGST…TNPL), 772 to 805 (SKLE…TGRT), 971 to 1018 (EQTS…NSAF), 1070 to 1130 (KAEE…SRLS), 1158 to 1225 (QKNR…RDIL), and 1247 to 1266 (KKDE…AGKI). A compositionally biased stretch (basic and acidic residues) spans 724–750 (SVEKAKENPPAEKEKEEGLLSRHDSFR). Composition is skewed to polar residues over residues 777–805 (HTST…TGRT), 971–982 (EQTSSTIQTIGN), 993–1015 (SGPT…TRPN), and 1112–1130 (KSLS…SRLS). A compositionally biased stretch (low complexity) spans 1204 to 1215 (SFLSRSRFSRPS). Residues 1247–1263 (KKDEQPSHADDNDDKKA) show a composition bias toward basic and acidic residues.

This sequence belongs to the FAM83 family.

Its subcellular location is the cytoplasm. It localises to the cytoskeleton. Functionally, may play a role in keratin cytoskeleton disassembly. In Xenopus tropicalis (Western clawed frog), this protein is Protein FAM83H.